We begin with the raw amino-acid sequence, 176 residues long: Ribosome maturation factor RimM (176 aa).

The region spanning 100–173 is the PRC barrel domain; sequence KDEYHYHDLI…WLLINPPPGL (74 aa).

This sequence belongs to the RimM family. As to quaternary structure, binds ribosomal protein uS19.

It is found in the cytoplasm. An accessory protein needed during the final step in the assembly of 30S ribosomal subunit, possibly for assembly of the head region. Essential for efficient processing of 16S rRNA. May be needed both before and after RbfA during the maturation of 16S rRNA. It has affinity for free ribosomal 30S subunits but not for 70S ribosomes. The polypeptide is Ribosome maturation factor RimM (Prochlorococcus marinus (strain NATL1A)).